The chain runs to 302 residues: N-acetyl-D-glucosamine kinase (302 aa).

ATP-binding positions include 4 to 11 (GFDVGGTK) and 133 to 140 (GFGGGLVF). Positions 157, 177, 179, and 184 each coordinate Zn(2+).

Belongs to the ROK (NagC/XylR) family. NagK subfamily.

The catalysed reaction is N-acetyl-D-glucosamine + ATP = N-acetyl-D-glucosamine 6-phosphate + ADP + H(+). It participates in cell wall biogenesis; peptidoglycan recycling. In terms of biological role, catalyzes the phosphorylation of N-acetyl-D-glucosamine (GlcNAc) derived from cell-wall degradation, yielding GlcNAc-6-P. This chain is N-acetyl-D-glucosamine kinase, found in Aliivibrio salmonicida (strain LFI1238) (Vibrio salmonicida (strain LFI1238)).